A 27-amino-acid polypeptide reads, in one-letter code: uncharacterized protein (27 aa).

This is an uncharacterized protein from Escherichia coli (strain K12).